The chain runs to 423 residues: Phosphoribosylamine--glycine ligase (423 aa).

The ATP-grasp domain occupies 107–314 (KAFMAKYNIP…LSDLVEAAID (208 aa)). Position 133–194 (133–194 (VNQKGAPIVI…EDFLQGEEAS (62 aa))) interacts with ATP. Residues Glu-284 and Asn-286 each coordinate Mg(2+).

Belongs to the GARS family. It depends on Mg(2+) as a cofactor. Requires Mn(2+) as cofactor.

It carries out the reaction 5-phospho-beta-D-ribosylamine + glycine + ATP = N(1)-(5-phospho-beta-D-ribosyl)glycinamide + ADP + phosphate + H(+). Its pathway is purine metabolism; IMP biosynthesis via de novo pathway; N(1)-(5-phospho-D-ribosyl)glycinamide from 5-phospho-alpha-D-ribose 1-diphosphate: step 2/2. The chain is Phosphoribosylamine--glycine ligase from Neisseria meningitidis serogroup B (strain ATCC BAA-335 / MC58).